A 573-amino-acid chain; its full sequence is 2-succinyl-5-enolpyruvyl-6-hydroxy-3-cyclohexene-1-carboxylate synthase (573 aa).

The protein belongs to the TPP enzyme family. MenD subfamily. As to quaternary structure, homodimer. Mg(2+) is required as a cofactor. The cofactor is Mn(2+). It depends on thiamine diphosphate as a cofactor.

The catalysed reaction is isochorismate + 2-oxoglutarate + H(+) = 5-enolpyruvoyl-6-hydroxy-2-succinyl-cyclohex-3-ene-1-carboxylate + CO2. The protein operates within quinol/quinone metabolism; 1,4-dihydroxy-2-naphthoate biosynthesis; 1,4-dihydroxy-2-naphthoate from chorismate: step 2/7. It participates in quinol/quinone metabolism; menaquinone biosynthesis. Functionally, catalyzes the thiamine diphosphate-dependent decarboxylation of 2-oxoglutarate and the subsequent addition of the resulting succinic semialdehyde-thiamine pyrophosphate anion to isochorismate to yield 2-succinyl-5-enolpyruvyl-6-hydroxy-3-cyclohexene-1-carboxylate (SEPHCHC). The sequence is that of 2-succinyl-5-enolpyruvyl-6-hydroxy-3-cyclohexene-1-carboxylate synthase from Shewanella sp. (strain ANA-3).